We begin with the raw amino-acid sequence, 128 residues long: Gastrotropin (128 aa).

Ala-2 bears the N-acetylalanine mark.

This sequence belongs to the calycin superfamily. Fatty-acid binding protein (FABP) family.

The protein localises to the cytoplasm. It is found in the membrane. Binds to bile acids and is involved in enterohepatic bile acid metabolism. Required for efficient apical to basolateral transport of conjugated bile acids in ileal enterocytes. Stimulates gastric acid and pepsinogen secretion. The polypeptide is Gastrotropin (FABP6) (Bos taurus (Bovine)).